A 124-amino-acid chain; its full sequence is Small ribosomal subunit protein uS12 (124 aa).

Asp89 bears the 3-methylthioaspartic acid mark. The tract at residues 103-124 (DTAGVKDRRQSRSKYGAKSPKE) is disordered.

Belongs to the universal ribosomal protein uS12 family. As to quaternary structure, part of the 30S ribosomal subunit. Contacts proteins S8 and S17. May interact with IF1 in the 30S initiation complex.

In terms of biological role, with S4 and S5 plays an important role in translational accuracy. Its function is as follows. Interacts with and stabilizes bases of the 16S rRNA that are involved in tRNA selection in the A site and with the mRNA backbone. Located at the interface of the 30S and 50S subunits, it traverses the body of the 30S subunit contacting proteins on the other side and probably holding the rRNA structure together. The combined cluster of proteins S8, S12 and S17 appears to hold together the shoulder and platform of the 30S subunit. The sequence is that of Small ribosomal subunit protein uS12 from Prochlorococcus marinus (strain NATL2A).